The following is a 108-amino-acid chain: Protein RnfH (108 aa).

Belongs to the UPF0125 (RnfH) family.

The protein is Protein RnfH of Laribacter hongkongensis (strain HLHK9).